A 66-amino-acid polypeptide reads, in one-letter code: Opicalcin-1 (66 aa).

The signal sequence occupies residues 1 to 22 (MKPSLIIVTFIVVFMAISCVAA). Positions 23–31 (DDEQETWIE) are excised as a propeptide. Disulfide bonds link Cys36/Cys50, Cys43/Cys54, and Cys49/Cys65. The tract at residues 55-57 (KRR) is essential for stimulation of [3H]ryanodine binding to RYR1.

It belongs to the scorpion calcin family. As to expression, expressed by the venom gland.

The protein localises to the secreted. Functionally, this toxin stabilizes ryanodine receptor 1 (RyR1) opening in a long-lasting subconductance state (35% of the full conductance state). Furthermore, it triggers calcium release from sarcoplasmic vesicles (2 nM are enough to induce a sharp release, and 67% of the total calcium is released after toxin (100 nM) addition) probably by acting as a cell-penetrating peptide (CPP). In addition, it has been shown to dose-dependently stimulate ryanodine binding to RyR1 (EC(50)=0.3 nM). It also augments the bell-shaped calcium-[3H]ryanodine binding curve that is maximal at about 10 uM calcium concentration. It binds a different site as ryanodine. It acts synergistically with caffeine. In vivo, intracerebroventricular injection into mice induces neurotoxic symptoms, followed by death. The polypeptide is Opicalcin-1 (Opistophthalmus carinatus (African yellow leg scorpion)).